Consider the following 837-residue polypeptide: Protein translocase subunit SecA (837 aa).

ATP contacts are provided by residues Q85, 103 to 107 (GEGKT), and D493. Zn(2+) is bound by residues C821, C823, C832, and H833.

This sequence belongs to the SecA family. As to quaternary structure, monomer and homodimer. Part of the essential Sec protein translocation apparatus which comprises SecA, SecYEG and auxiliary proteins SecDF. Other proteins may also be involved. Requires Zn(2+) as cofactor.

It localises to the cell membrane. Its subcellular location is the cytoplasm. It catalyses the reaction ATP + H2O + cellular proteinSide 1 = ADP + phosphate + cellular proteinSide 2.. Part of the Sec protein translocase complex. Interacts with the SecYEG preprotein conducting channel. Has a central role in coupling the hydrolysis of ATP to the transfer of proteins into and across the cell membrane, serving as an ATP-driven molecular motor driving the stepwise translocation of polypeptide chains across the membrane. In Streptococcus pneumoniae serotype 2 (strain D39 / NCTC 7466), this protein is Protein translocase subunit SecA.